The following is a 556-amino-acid chain: MLRSAAITKGTQRSPNRAMLRAVGFGDEDFNKPIIGIANGYSTITPCNIGLNDLARRSEEAARQAGAMPQMFGTITVSDGISMGTEGMKYSLVSREVIADSIETACNAQSMDGVLAIGGCDKNMPGAMIALARMNIPGVFVYGGTIKPGKLADRDLTVVSAFEAVGQHASGKINEEQLTAIEKNACPGAGSCGGMFTANTMSAAIETLGLSLPYSSTMAAEDEEKANSAARSAEVLVDAIKANICPLDLLTKNAFENAISVVMAVGGSTNAVLHLLAIARSAGVDLCIDDFERIRQRVPVICDLKPSGRYVTVDLHKAGGIPQVMKQLLDAGLLHGDCCNVEGKTLRELLKDVPSEPSAEQDVIHPLSKPVYAKGHLAILKGNLASEGCVAKISGIKTPVLTGPARVFESEEACLAAILNNKVKAGDVVVIRNEGPVGGPGMREMLAPTSAIVGADLGDKVALITDGRFSGGTYGLVVGHVAPEAAVGGMIGLVHEGDSITIDADQLLIQLNIENDELERRSSAWKKPQPRYQTGVLGKYARMVSSSSKGAVTDQP.

[2Fe-2S] cluster is bound at residue Cys-47. Asp-79 lines the Mg(2+) pocket. Cys-120 lines the [2Fe-2S] cluster pocket. Residues Asp-121 and Lys-122 each contribute to the Mg(2+) site. Position 122 is an N6-carboxylysine (Lys-122). Cys-192 contributes to the [2Fe-2S] cluster binding site. Glu-444 lines the Mg(2+) pocket. Ser-470 acts as the Proton acceptor in catalysis.

This sequence belongs to the IlvD/Edd family. As to quaternary structure, homodimer. Requires [2Fe-2S] cluster as cofactor. It depends on Mg(2+) as a cofactor.

The enzyme catalyses (2R)-2,3-dihydroxy-3-methylbutanoate = 3-methyl-2-oxobutanoate + H2O. It catalyses the reaction (2R,3R)-2,3-dihydroxy-3-methylpentanoate = (S)-3-methyl-2-oxopentanoate + H2O. Its pathway is amino-acid biosynthesis; L-isoleucine biosynthesis; L-isoleucine from 2-oxobutanoate: step 3/4. The protein operates within amino-acid biosynthesis; L-valine biosynthesis; L-valine from pyruvate: step 3/4. Functionally, functions in the biosynthesis of branched-chain amino acids. Catalyzes the dehydration of (2R,3R)-2,3-dihydroxy-3-methylpentanoate (2,3-dihydroxy-3-methylvalerate) into 2-oxo-3-methylpentanoate (2-oxo-3-methylvalerate) and of (2R)-2,3-dihydroxy-3-methylbutanoate (2,3-dihydroxyisovalerate) into 2-oxo-3-methylbutanoate (2-oxoisovalerate), the penultimate precursor to L-isoleucine and L-valine, respectively. The chain is Dihydroxy-acid dehydratase from Prochlorococcus marinus (strain MIT 9303).